We begin with the raw amino-acid sequence, 622 residues long: Apical membrane antigen 1 (622 aa).

The first 24 residues, 1 to 24 (MRKLYCVLLLSAFEFTYMINFGRG), serve as a signal peptide directing secretion. Topologically, residues 25 to 546 (QNYWEHPYQN…EHKPTYDNMK (522 aa)) are extracellular. 5 cysteine pairs are disulfide-bonded: Cys-149–Cys-302, Cys-217–Cys-247, Cys-263–Cys-275, Cys-320–Cys-418, and Cys-337–Cys-409. N-linked (GlcNAc...) asparagine glycans are attached at residues Asn-286, Asn-371, Asn-421, Asn-422, and Asn-499. Intrachain disulfides connect Cys-443–Cys-502, Cys-490–Cys-507, and Cys-492–Cys-509. The helical transmembrane segment at 547-567 (IIIASSAAVAVLATILMVYLY) threads the bilayer. Topologically, residues 568–622 (KRKGNAEKYDKMDEPQDYGKSTSRNDEMLDPEASFWGEEKRASHTTPVLMEKPYY) are cytoplasmic. The tract at residues 577–607 (DKMDEPQDYGKSTSRNDEMLDPEASFWGEEK) is disordered.

It belongs to the apicomplexan parasites AMA1 family.

The protein localises to the membrane. Functionally, involved in parasite invasion of erythrocytes. This Plasmodium falciparum (isolate thtn / Thailand) protein is Apical membrane antigen 1 (AMA-1).